Here is a 259-residue protein sequence, read N- to C-terminus: Tryptophan synthase alpha chain (259 aa).

Catalysis depends on proton acceptor residues E35 and D46.

This sequence belongs to the TrpA family. Tetramer of two alpha and two beta chains.

It catalyses the reaction (1S,2R)-1-C-(indol-3-yl)glycerol 3-phosphate + L-serine = D-glyceraldehyde 3-phosphate + L-tryptophan + H2O. The protein operates within amino-acid biosynthesis; L-tryptophan biosynthesis; L-tryptophan from chorismate: step 5/5. Functionally, the alpha subunit is responsible for the aldol cleavage of indoleglycerol phosphate to indole and glyceraldehyde 3-phosphate. The sequence is that of Tryptophan synthase alpha chain from Methanococcus vannielii (strain ATCC 35089 / DSM 1224 / JCM 13029 / OCM 148 / SB).